The sequence spans 860 residues: Alanine--tRNA ligase (860 aa).

Zn(2+) contacts are provided by His-563, His-567, Cys-665, and His-669. Residues 824 to 843 (VGGKGGGRPDMAQAGGTDSS) are disordered.

The protein belongs to the class-II aminoacyl-tRNA synthetase family. It depends on Zn(2+) as a cofactor.

Its subcellular location is the cytoplasm. The catalysed reaction is tRNA(Ala) + L-alanine + ATP = L-alanyl-tRNA(Ala) + AMP + diphosphate. Its function is as follows. Catalyzes the attachment of alanine to tRNA(Ala) in a two-step reaction: alanine is first activated by ATP to form Ala-AMP and then transferred to the acceptor end of tRNA(Ala). Also edits incorrectly charged Ser-tRNA(Ala) and Gly-tRNA(Ala) via its editing domain. This Vibrio vulnificus (strain YJ016) protein is Alanine--tRNA ligase.